The sequence spans 501 residues: Lysine--tRNA ligase (501 aa).

The Mg(2+) site is built by E411 and E418.

Belongs to the class-II aminoacyl-tRNA synthetase family. In terms of assembly, homodimer. Requires Mg(2+) as cofactor.

Its subcellular location is the cytoplasm. The enzyme catalyses tRNA(Lys) + L-lysine + ATP = L-lysyl-tRNA(Lys) + AMP + diphosphate. This Clostridium perfringens (strain 13 / Type A) protein is Lysine--tRNA ligase.